A 141-amino-acid chain; its full sequence is Large ribosomal subunit protein uL11 (141 aa).

It belongs to the universal ribosomal protein uL11 family. In terms of assembly, part of the ribosomal stalk of the 50S ribosomal subunit. Interacts with L10 and the large rRNA to form the base of the stalk. L10 forms an elongated spine to which L12 dimers bind in a sequential fashion forming a multimeric L10(L12)X complex. One or more lysine residues are methylated.

Functionally, forms part of the ribosomal stalk which helps the ribosome interact with GTP-bound translation factors. This chain is Large ribosomal subunit protein uL11, found in Synechococcus sp. (strain RCC307).